The sequence spans 300 residues: Ribonuclease HIII (300 aa).

The RNase H type-2 domain occupies 83–300 (IPIIGSDEVG…THKAQALLTK (218 aa)). A divalent metal cation is bound by residues aspartate 89, glutamate 90, and aspartate 194.

Belongs to the RNase HII family. RnhC subfamily. Mn(2+) serves as cofactor. Requires Mg(2+) as cofactor.

Its subcellular location is the cytoplasm. The catalysed reaction is Endonucleolytic cleavage to 5'-phosphomonoester.. Endonuclease that specifically degrades the RNA of RNA-DNA hybrids. This Streptococcus pyogenes serotype M1 protein is Ribonuclease HIII.